We begin with the raw amino-acid sequence, 152 residues long: Probable ribose-5-phosphate isomerase B (152 aa).

12 to 13 is a binding site for D-ribulose 5-phosphate; the sequence is DH. The active-site Proton acceptor is Cys-70. D-ribulose 5-phosphate is bound at residue 71 to 75; the sequence is GTGVG. His-103 functions as the Proton donor in the catalytic mechanism. D-ribulose 5-phosphate is bound by residues Asp-104, Arg-114, Arg-137, and Arg-141.

This sequence belongs to the LacAB/RpiB family. As to quaternary structure, homodimer.

The enzyme catalyses aldehydo-D-ribose 5-phosphate = D-ribulose 5-phosphate. It functions in the pathway carbohydrate degradation; pentose phosphate pathway; D-ribose 5-phosphate from D-ribulose 5-phosphate (non-oxidative stage): step 1/1. Functionally, catalyzes the interconversion of ribulose-5-P and ribose-5-P. The protein is Probable ribose-5-phosphate isomerase B of Mycoplasma pneumoniae (strain ATCC 29342 / M129 / Subtype 1) (Mycoplasmoides pneumoniae).